The primary structure comprises 706 residues: Fatty acid oxidation complex subunit alpha (706 aa).

Residues 1–188 (MEKTFNLTRR…KMGLVNDVVP (188 aa)) are enoyl-CoA hydratase. A 3-hydroxyacyl-CoA dehydrogenase region spans residues 308 to 706 (RKVKKAVILG…TMARENVSFF (399 aa)).

The protein in the N-terminal section; belongs to the enoyl-CoA hydratase/isomerase family. It in the central section; belongs to the 3-hydroxyacyl-CoA dehydrogenase family. Heterotetramer of two alpha chains (FadJ) and two beta chains (FadI).

It is found in the cytoplasm. The enzyme catalyses a (3S)-3-hydroxyacyl-CoA = a (2E)-enoyl-CoA + H2O. The catalysed reaction is a 4-saturated-(3S)-3-hydroxyacyl-CoA = a (3E)-enoyl-CoA + H2O. It carries out the reaction a (3S)-3-hydroxyacyl-CoA + NAD(+) = a 3-oxoacyl-CoA + NADH + H(+). It catalyses the reaction (3S)-3-hydroxybutanoyl-CoA = (3R)-3-hydroxybutanoyl-CoA. Its pathway is lipid metabolism; fatty acid beta-oxidation. Its function is as follows. Catalyzes the formation of a hydroxyacyl-CoA by addition of water on enoyl-CoA. Also exhibits 3-hydroxyacyl-CoA epimerase and 3-hydroxyacyl-CoA dehydrogenase activities. In Shewanella putrefaciens (strain CN-32 / ATCC BAA-453), this protein is Fatty acid oxidation complex subunit alpha.